Reading from the N-terminus, the 196-residue chain is Aequorin-1 (196 aa).

The propeptide occupies 1–7 (MTSEQYS). EF-hand domains are found at residues 18–53 (KWIGRHKHMFNFLDVNHNGRISLDEMVYKASDIVIN), 54–108 (NLGA…SKNQ), 111–146 (LIRLWGDALFDIIDKDQNGAISLDEWKAYTKSDGII), and 147–182 (QSSEDCEETFRVCDIDESGQLDVDEMTRQHLGFWYT). D31, N33, N35, R37, and E42 together coordinate Ca(2+). 3 may interact with the chromophore regions span residues 47–57 (ASDIVINNLGA), 62–72 (AKRHKDAVEAF), and 107–117 (NQITLIRLWGD). Residues D124, D126, N128, E135, D160, D162, S164, Q166, and E171 each contribute to the Ca(2+) site.

Belongs to the aequorin family. In terms of processing, the reduction of the disulfide bond is necessary to regenerate aequorin from apoaequorin.

In terms of biological role, ca(2+)-dependent bioluminescence photoprotein. Displays an emission peak at 470 nm (blue light). Trace amounts of calcium ion trigger the intramolecular oxidation of the chromophore, coelenterazine into coelenteramide and CO(2) with the concomitant emission of light. The sequence is that of Aequorin-1 from Aequorea victoria (Water jellyfish).